Consider the following 212-residue polypeptide: MIIAIDGPAASGKGTLGKRLAHHYGYRHLDTGVIYRAVAYALMQSGHDLRDEAAAVAAALELDPEKFGDPALKTQKVGEGASIVSAIPRVREVLVNFQRQFAADPPGAVLDGRDIGTVICPHADVKIFVVADPKVRARRRTMEAKARGEAADEAAVLADIIQRDERDKNRPIAPLKPAPDAYLLDNSQLDIEGGVRAAIDIIEAVRAGRSRG.

7 to 15 provides a ligand contact to ATP; the sequence is GPAASGKGT.

This sequence belongs to the cytidylate kinase family. Type 1 subfamily.

It is found in the cytoplasm. The enzyme catalyses CMP + ATP = CDP + ADP. The catalysed reaction is dCMP + ATP = dCDP + ADP. The polypeptide is Cytidylate kinase (Bradyrhizobium diazoefficiens (strain JCM 10833 / BCRC 13528 / IAM 13628 / NBRC 14792 / USDA 110)).